We begin with the raw amino-acid sequence, 404 residues long: Formate-dependent phosphoribosylglycinamide formyltransferase (404 aa).

N(1)-(5-phospho-beta-D-ribosyl)glycinamide contacts are provided by residues 25–26 (EL) and Glu85. Residues Arg118, Lys159, 164 to 169 (SSGKGQ), 199 to 202 (EGFI), and Glu207 contribute to the ATP site. Positions 123 to 318 (RLAAEELGLP…EFELHARAIL (196 aa)) constitute an ATP-grasp domain. Mg(2+) is bound by residues Glu277 and Glu289. Residues Asp296, Lys365, and 372 to 373 (RR) contribute to the N(1)-(5-phospho-beta-D-ribosyl)glycinamide site. Residues 384–404 (TDEARSRAKQAAAAVRPVSAK) are disordered. Positions 392–404 (KQAAAAVRPVSAK) are enriched in low complexity.

This sequence belongs to the PurK/PurT family. In terms of assembly, homodimer.

The catalysed reaction is N(1)-(5-phospho-beta-D-ribosyl)glycinamide + formate + ATP = N(2)-formyl-N(1)-(5-phospho-beta-D-ribosyl)glycinamide + ADP + phosphate + H(+). It participates in purine metabolism; IMP biosynthesis via de novo pathway; N(2)-formyl-N(1)-(5-phospho-D-ribosyl)glycinamide from N(1)-(5-phospho-D-ribosyl)glycinamide (formate route): step 1/1. Its function is as follows. Involved in the de novo purine biosynthesis. Catalyzes the transfer of formate to 5-phospho-ribosyl-glycinamide (GAR), producing 5-phospho-ribosyl-N-formylglycinamide (FGAR). Formate is provided by PurU via hydrolysis of 10-formyl-tetrahydrofolate. The sequence is that of Formate-dependent phosphoribosylglycinamide formyltransferase from Paraburkholderia xenovorans (strain LB400).